A 166-amino-acid polypeptide reads, in one-letter code: Transmembrane protein 190 (166 aa).

Positions M1–A21 are cleaved as a signal peptide. Residues N22 to M81 lie on the Extracellular side of the membrane. The P-type domain occupies W31–R71. 3 disulfide bridges follow: C33–C61, C43–C60, and C55–C67. A helical transmembrane segment spans residues W82–W102. Topologically, residues W103 to E166 are cytoplasmic. Positions L130 to E166 are disordered.

Detected in testis and in a mixture of spermatogenic cells at various stages (testicular germ cells). Not detected in heart, brain, spleen, lung, liver, skeletal muscle and kidney.

It localises to the membrane. This chain is Transmembrane protein 190 (Tmem190), found in Mus musculus (Mouse).